Here is a 698-residue protein sequence, read N- to C-terminus: Elongation factor G 1 (698 aa).

A tr-type G domain is found at 8-290; it reads ERYRNIGICA…AVIEFLPSPT (283 aa). Residues 17 to 24, 88 to 92, and 142 to 145 each bind GTP; these read AHVDAGKT, DTPGH, and NKMD.

It belongs to the TRAFAC class translation factor GTPase superfamily. Classic translation factor GTPase family. EF-G/EF-2 subfamily.

The protein resides in the cytoplasm. In terms of biological role, catalyzes the GTP-dependent ribosomal translocation step during translation elongation. During this step, the ribosome changes from the pre-translocational (PRE) to the post-translocational (POST) state as the newly formed A-site-bound peptidyl-tRNA and P-site-bound deacylated tRNA move to the P and E sites, respectively. Catalyzes the coordinated movement of the two tRNA molecules, the mRNA and conformational changes in the ribosome. This Vibrio cholerae serotype O1 (strain ATCC 39315 / El Tor Inaba N16961) protein is Elongation factor G 1.